A 787-amino-acid polypeptide reads, in one-letter code: Serine/threonine-protein kinase SCH9 (787 aa).

3 disordered regions span residues 1–82 (MVDF…QSGT), 132–172 (PQQQ…GSSQ), and 238–280 (SPVS…LFGQ). Residues 132–155 (PQQQQQQQAQQPPPEQQQSSAPYQ) are compositionally biased toward low complexity. Composition is skewed to polar residues over residues 156-172 (NSAN…GSSQ) and 239-263 (PVSS…SNHG). Residues 182–354 (DKTGNKLSPA…KNNKNESEWL (173 aa)) form the C2 domain. Residues 392 to 653 (FHFLRLLGKG…ARELKAHPFF (262 aa)) enclose the Protein kinase domain. ATP-binding positions include 398–406 (LGKGTFGQV) and Lys421. Asp518 serves as the catalytic Proton acceptor. The 76-residue stretch at 654–729 (ADIDWDLLRA…VDDSTMDDHF (76 aa)) folds into the AGC-kinase C-terminal domain.

This sequence belongs to the protein kinase superfamily. AGC Ser/Thr protein kinase family. cAMP subfamily.

It catalyses the reaction L-seryl-[protein] + ATP = O-phospho-L-seryl-[protein] + ADP + H(+). The catalysed reaction is L-threonyl-[protein] + ATP = O-phospho-L-threonyl-[protein] + ADP + H(+). Functionally, protein kinase that is part of growth control pathway which is at least partially redundant with the cAMP pathway. Plays a role in filamentous growth and virulence. Prevents hypha formation specifically under hypoxia at high CO(2) levels. Required for chlamydospore formation, distinctive morphological feature of the fungal pathogen C.albicans that can be induced to form in oxygen-limited environments and has been reported in clinical specimens. The polypeptide is Serine/threonine-protein kinase SCH9 (SCH9) (Candida albicans (strain SC5314 / ATCC MYA-2876) (Yeast)).